We begin with the raw amino-acid sequence, 123 residues long: Small ribosomal subunit protein uS12c (123 aa).

This sequence belongs to the universal ribosomal protein uS12 family. As to quaternary structure, part of the 30S ribosomal subunit.

The protein resides in the plastid. It is found in the chloroplast. With S4 and S5 plays an important role in translational accuracy. Located at the interface of the 30S and 50S subunits. This is Small ribosomal subunit protein uS12c (rps12) from Huperzia lucidula (Shining clubmoss).